The chain runs to 364 residues: Tyrosyl-DNA phosphodiesterase 2 (364 aa).

The residue at position 1 (Met-1) is an N-acetylmethionine. Over residues 1–10 the composition is skewed to low complexity; the sequence is MERNSGPEAG. The segment at 1–21 is disordered; the sequence is MERNSGPEAGPEAELEEGEPE. Lys-23 participates in a covalent cross-link: Glycyl lysine isopeptide (Lys-Gly) (interchain with G-Cter in SUMO2). The interval 68–108 is disordered; that stretch reads ESASESRPESLSEPGSCVDLTKEETNDSISSKTSTSEDKSV. A phosphothreonine; by ACVR1B mark is found at Thr-88 and Thr-92. Ser-95 carries the phosphoserine modification. An interaction with 5' end of substrate DNA region spans residues 122 to 126; it reads NIDGL. The Mg(2+) site is built by Asp-124 and Glu-154. Residues 228 to 233 form an interaction with 5' end of substrate DNA region; it reads HLESTR. Asp-264 serves as the catalytic Proton donor/acceptor. The interaction with 5' end of substrate DNA stretch occupies residues 266 to 268; it reads NLR.

Belongs to the CCR4/nocturin family. As to quaternary structure, interacts with TRAF2, TRAF3, TRAF5, TRAF6, TNFRSF8/CD30, TNFRSF5/CD40, TNFRSF1B/TNF-R75, ETS1, ETS2, FLI1, SMAD3 and ACVR1B/ALK4. The cofactor is Mg(2+). Mn(2+) is required as a cofactor. In terms of processing, ubiquitinated by TRAF6.

It is found in the nucleus. It localises to the PML body. The protein localises to the nucleolus. The protein resides in the cytoplasm. Functionally, DNA repair enzyme that can remove a variety of covalent adducts from DNA through hydrolysis of a 5'-phosphodiester bond, giving rise to DNA with a free 5' phosphate. Catalyzes the hydrolysis of dead-end complexes between DNA and the topoisomerase 2 (TOP2) active site tyrosine residue. The 5'-tyrosyl DNA phosphodiesterase activity can enable the repair of TOP2-induced DNA double-strand breaks/DSBs without the need for nuclease activity, creating a 'clean' DSB with 5'-phosphate termini that are ready for ligation. Thereby, protects the transcription of many genes involved in neurological development and maintenance from the abortive activity of TOP2. Hydrolyzes 5'-phosphoglycolates on protruding 5' ends on DSBs due to DNA damage by radiation and free radicals. Has preference for single-stranded DNA or duplex DNA with a 4 base pair overhang as substrate. Also has 3'-tyrosyl DNA phosphodiesterase activity, but less efficiently and much slower than TDP1. Constitutes the major if not only 5'-tyrosyl-DNA phosphodiesterase in cells. Also acts as an adapter by participating in the specific activation of MAP3K7/TAK1 in response to TGF-beta: associates with components of the TGF-beta receptor-TRAF6-TAK1 signaling module and promotes their ubiquitination dependent complex formation. Involved in non-canonical TGF-beta induced signaling routes. May also act as a negative regulator of ETS1 and may inhibit NF-kappa-B activation. Acts as a regulator of ribosome biogenesis following stress. In Bos taurus (Bovine), this protein is Tyrosyl-DNA phosphodiesterase 2 (TDP2).